The chain runs to 798 residues: Disintegrin and metalloproteinase domain-containing protein B (798 aa).

The first 23 residues, methionine 1–alanine 23, serve as a signal peptide directing secretion. Residues serine 24 to proline 706 lie on the Extracellular side of the membrane. 5 N-linked (GlcNAc...) asparagine glycosylation sites follow: asparagine 32, asparagine 226, asparagine 227, asparagine 313, and asparagine 407. Residues lysine 271–threonine 510 form the Peptidase M12B domain. Intrachain disulfides connect cysteine 395–cysteine 495, cysteine 448–cysteine 459, and cysteine 580–cysteine 600. Histidine 431 provides a ligand contact to Zn(2+). Residue glutamate 432 is part of the active site. Zn(2+) is bound by residues histidine 435 and histidine 441. Residues glycine 519–aspartate 608 form the Disintegrin domain. Residues isoleucine 707–isoleucine 727 traverse the membrane as a helical segment. Residues cysteine 728–alanine 798 lie on the Cytoplasmic side of the membrane. Residues glutamine 734–alanine 798 are disordered. Pro residues predominate over residues asparagine 775–methionine 792.

Zn(2+) is required as a cofactor.

Its subcellular location is the membrane. Functionally, probable zinc protease. The protein is Disintegrin and metalloproteinase domain-containing protein B (ADM-B) of Trichophyton verrucosum (strain HKI 0517).